Consider the following 196-residue polypeptide: Holliday junction branch migration complex subunit RuvA (196 aa).

The domain I stretch occupies residues 1-63; it reads MIEYIKGEIV…EDAHLLFGFA (63 aa). Positions 64-142 are domain II; the sequence is EKIERELFLL…PMESMAGNLP (79 aa). Positions 142–146 are flexible linker; sequence PEASV. A domain III region spans residues 147-196; the sequence is SNGAVTEEAVAALVMLGFQKAASQKAVSAILKGSPTLAVEQVIKTALRML.

The protein belongs to the RuvA family. In terms of assembly, homotetramer. Forms an RuvA(8)-RuvB(12)-Holliday junction (HJ) complex. HJ DNA is sandwiched between 2 RuvA tetramers; dsDNA enters through RuvA and exits via RuvB. An RuvB hexamer assembles on each DNA strand where it exits the tetramer. Each RuvB hexamer is contacted by two RuvA subunits (via domain III) on 2 adjacent RuvB subunits; this complex drives branch migration. In the full resolvosome a probable DNA-RuvA(4)-RuvB(12)-RuvC(2) complex forms which resolves the HJ.

It localises to the cytoplasm. Its function is as follows. The RuvA-RuvB-RuvC complex processes Holliday junction (HJ) DNA during genetic recombination and DNA repair, while the RuvA-RuvB complex plays an important role in the rescue of blocked DNA replication forks via replication fork reversal (RFR). RuvA specifically binds to HJ cruciform DNA, conferring on it an open structure. The RuvB hexamer acts as an ATP-dependent pump, pulling dsDNA into and through the RuvAB complex. HJ branch migration allows RuvC to scan DNA until it finds its consensus sequence, where it cleaves and resolves the cruciform DNA. This Parabacteroides distasonis (strain ATCC 8503 / DSM 20701 / CIP 104284 / JCM 5825 / NCTC 11152) protein is Holliday junction branch migration complex subunit RuvA.